We begin with the raw amino-acid sequence, 146 residues long: Large ribosomal subunit protein uL15 (146 aa).

The segment covering 1 to 13 (MKLHELKPAEGSR) has biased composition (basic and acidic residues). The interval 1-48 (MKLHELKPAEGSRKVRNRVGRGIGSGNGKTAGKGHKGQNARSGGGVRL) is disordered. A compositionally biased stretch (gly residues) spans 21–31 (RGIGSGNGKTA).

This sequence belongs to the universal ribosomal protein uL15 family. Part of the 50S ribosomal subunit.

Its function is as follows. Binds to the 23S rRNA. This is Large ribosomal subunit protein uL15 from Bacillus cytotoxicus (strain DSM 22905 / CIP 110041 / 391-98 / NVH 391-98).